The chain runs to 389 residues: Alanine racemase (389 aa).

The active-site Proton acceptor; specific for D-alanine is Lys-48. At Lys-48 the chain carries N6-(pyridoxal phosphate)lysine. Arg-144 is a substrate binding site. Tyr-281 functions as the Proton acceptor; specific for L-alanine in the catalytic mechanism. Met-329 contributes to the substrate binding site.

Belongs to the alanine racemase family. Pyridoxal 5'-phosphate is required as a cofactor.

The enzyme catalyses L-alanine = D-alanine. The protein operates within amino-acid biosynthesis; D-alanine biosynthesis; D-alanine from L-alanine: step 1/1. In terms of biological role, catalyzes the interconversion of L-alanine and D-alanine. May also act on other amino acids. The sequence is that of Alanine racemase (alr) from Leptospira interrogans serogroup Icterohaemorrhagiae serovar copenhageni (strain Fiocruz L1-130).